The following is an 808-amino-acid chain: Protein SEY1 (808 aa).

A disordered region spans residues Met-1–Pro-21. The Cytoplasmic portion of the chain corresponds to Met-1–Gln-701. Positions Gly-57–Tyr-286 constitute a GB1/RHD3-type G domain. Residue Gly-67–Ser-74 coordinates GTP. Residues Ile-702–Ile-722 form a helical membrane-spanning segment. At Arg-723–Pro-725 the chain is on the lumenal side. A helical membrane pass occupies residues Leu-726–Leu-746. Over Leu-747–Met-808 the chain is Cytoplasmic.

This sequence belongs to the TRAFAC class dynamin-like GTPase superfamily. GB1/RHD3 GTPase family. RHD3 subfamily.

The protein resides in the endoplasmic reticulum membrane. In terms of biological role, cooperates with the reticulon proteins and tubule-shaping DP1 family proteins to generate and maintain the structure of the tubular endoplasmic reticulum network. Has GTPase activity, which is required for its function in ER organization. The sequence is that of Protein SEY1 from Candida tropicalis (strain ATCC MYA-3404 / T1) (Yeast).